A 699-amino-acid polypeptide reads, in one-letter code: Elongation factor G (699 aa).

The tr-type G domain maps to 8-290 (ERYRNIGIMA…GVIEYLPSPV (283 aa)). Residues 17–24 (AHIDAGKT), 88–92 (DTPGH), and 142–145 (NKMD) each bind GTP.

Belongs to the TRAFAC class translation factor GTPase superfamily. Classic translation factor GTPase family. EF-G/EF-2 subfamily.

The protein resides in the cytoplasm. Catalyzes the GTP-dependent ribosomal translocation step during translation elongation. During this step, the ribosome changes from the pre-translocational (PRE) to the post-translocational (POST) state as the newly formed A-site-bound peptidyl-tRNA and P-site-bound deacylated tRNA move to the P and E sites, respectively. Catalyzes the coordinated movement of the two tRNA molecules, the mRNA and conformational changes in the ribosome. In Alkalilimnicola ehrlichii (strain ATCC BAA-1101 / DSM 17681 / MLHE-1), this protein is Elongation factor G.